Here is a 200-residue protein sequence, read N- to C-terminus: Blue fluorescence protein (200 aa).

Lumazine-binding repeat units follow at residues 1–111 (MFKG…TGGR) and 112–200 (SLSG…AGNW).

In terms of assembly, monomer.

It is found in the cytoplasm. In terms of biological role, blue fluorescence protein (BFP) that can bind 6,7-dimethyl-8-ribityllumazine, riboflavin, and 6-methyl-7-oxo-8-ribityllumazine as a bound fluorophore. Has no riboflavin-synthase activity. In Aliivibrio fischeri (Vibrio fischeri), this protein is Blue fluorescence protein.